The primary structure comprises 396 residues: Elongation factor Tu (396 aa).

Residues 10–206 (KPHVNVGTIG…ALDTYIPTPE (197 aa)) form the tr-type G domain. Positions 19-26 (GHVDHGKT) are G1. 19–26 (GHVDHGKT) is a GTP binding site. Residue Thr-26 participates in Mg(2+) binding. The G2 stretch occupies residues 60–64 (GITIN). The G3 stretch occupies residues 81–84 (DCPG). Residues 81-85 (DCPGH) and 136-139 (NKCD) contribute to the GTP site. The G4 stretch occupies residues 136 to 139 (NKCD). The segment at 174–176 (SAK) is G5.

Belongs to the TRAFAC class translation factor GTPase superfamily. Classic translation factor GTPase family. EF-Tu/EF-1A subfamily. Monomer.

It localises to the cytoplasm. The catalysed reaction is GTP + H2O = GDP + phosphate + H(+). GTP hydrolase that promotes the GTP-dependent binding of aminoacyl-tRNA to the A-site of ribosomes during protein biosynthesis. The polypeptide is Elongation factor Tu (Cupriavidus necator (strain ATCC 17699 / DSM 428 / KCTC 22496 / NCIMB 10442 / H16 / Stanier 337) (Ralstonia eutropha)).